A 151-amino-acid chain; its full sequence is Major curlin subunit (151 aa).

Residues 1-20 form the signal peptide; sequence MKLLKVAAIAAIVFSGSALA. The disordered stretch occupies residues 71-90; sequence TQHGGGNGADVGQGSDDSSI.

It belongs to the CsgA/CsgB family.

It localises to the fimbrium. Curlin is the structural subunit of the curli fimbriae. Curli are coiled surface structures that assemble preferentially at growth temperatures below 37 degrees Celsius. Curli can bind to fibronectin. The protein is Major curlin subunit (csgA) of Escherichia coli (strain K12).